Here is an 829-residue protein sequence, read N- to C-terminus: Leucine--tRNA ligase (829 aa).

A 'HIGH' region motif is present at residues 40 to 50; that stretch reads PYPSGNIHMGH. The 'KMSKS' region motif lies at 581 to 585; it reads KMSKS. Lys584 is a binding site for ATP.

Belongs to the class-I aminoacyl-tRNA synthetase family.

The protein localises to the cytoplasm. The enzyme catalyses tRNA(Leu) + L-leucine + ATP = L-leucyl-tRNA(Leu) + AMP + diphosphate. In Nitratidesulfovibrio vulgaris (strain ATCC 29579 / DSM 644 / CCUG 34227 / NCIMB 8303 / VKM B-1760 / Hildenborough) (Desulfovibrio vulgaris), this protein is Leucine--tRNA ligase.